Consider the following 338-residue polypeptide: Alcohol dehydrogenase (338 aa).

Zn(2+)-binding residues include Cys38, His61, Glu62, Cys92, Cys95, Cys98, Cys106, and Cys148.

Belongs to the zinc-containing alcohol dehydrogenase family. In terms of assembly, homotetramer. The cofactor is Zn(2+).

It carries out the reaction a primary alcohol + NAD(+) = an aldehyde + NADH + H(+). The catalysed reaction is a secondary alcohol + NAD(+) = a ketone + NADH + H(+). It catalyses the reaction ethanol + NAD(+) = acetaldehyde + NADH + H(+). The enzyme catalyses 1-propanol + NAD(+) = propanal + NADH + H(+). It carries out the reaction butan-1-ol + NAD(+) = butanal + NADH + H(+). The catalysed reaction is propan-2-ol + NAD(+) = acetone + NADH + H(+). Functionally, psychrophilic alcohol dehydrogenase that exhibits a wide range of substrate specificity, oxidizing mainly primary and secondary aliphatic alcohols, utilizing NAD(+) as a cosubstrate. In vitro, shows highest reaction rates for ethanol as a substrate and gradually decreases its reaction rates as the length and branching of the carbon chain of the alcohol substrates increase. To a lesser extent, is also able to reduce aldehydes and ketones. Do not catalyze the further oxidation of aldehydes to carboxylic acids. Cannot use NADP(+) instead of NAD(+). The protein is Alcohol dehydrogenase of Moraxella sp. (strain TAE123).